The sequence spans 235 residues: Superoxide dismutase [Mn] 3.1, mitochondrial (235 aa).

The transit peptide at 1 to 31 directs the protein to the mitochondrion; that stretch reads MALRTLASKKVLSFPFGGAGRPLAAAASARG. His59, His107, Asp196, and His200 together coordinate Mn(2+).

The protein belongs to the iron/manganese superoxide dismutase family. As to quaternary structure, homotetramer. It depends on Mn(2+) as a cofactor.

It is found in the mitochondrion matrix. The catalysed reaction is 2 superoxide + 2 H(+) = H2O2 + O2. In terms of biological role, destroys superoxide anion radicals which are normally produced within the cells and which are toxic to biological systems. The sequence is that of Superoxide dismutase [Mn] 3.1, mitochondrial (SODA.4) from Zea mays (Maize).